A 147-amino-acid chain; its full sequence is Large ribosomal subunit protein uL13 (147 aa).

This sequence belongs to the universal ribosomal protein uL13 family. As to quaternary structure, part of the 50S ribosomal subunit.

This protein is one of the early assembly proteins of the 50S ribosomal subunit, although it is not seen to bind rRNA by itself. It is important during the early stages of 50S assembly. In Mycolicibacterium gilvum (strain PYR-GCK) (Mycobacterium gilvum (strain PYR-GCK)), this protein is Large ribosomal subunit protein uL13.